A 427-amino-acid chain; its full sequence is Galactose-3-O-sulfotransferase 3 (427 aa).

Topologically, residues 1–19 are cytoplasmic; sequence MPPIFQRLQQATKMSRRKI. Residues 20–40 traverse the membrane as a helical; Signal-anchor for type II membrane protein segment; the sequence is LLLVLGCSTLSLLIHQGAQLS. At 41–427 the chain is on the lumenal side; it reads WYPKLFPLSC…RPIRALRPGH (387 aa). Residues asparagine 90, asparagine 109, asparagine 176, and asparagine 301 are each glycosylated (N-linked (GlcNAc...) asparagine). The segment at 404–427 is disordered; the sequence is MRLRPEPVLDNPPPRPIRALRPGH.

It belongs to the galactose-3-O-sulfotransferase family. Mg(2+) is required as a cofactor.

It is found in the golgi apparatus. Its subcellular location is the golgi stack membrane. The protein operates within protein modification; carbohydrate sulfation. In terms of biological role, transfers a sulfate to position 3 of non-reducing beta-galactosyl residues in N-glycans and core2-branched O-glycans. Has high activity towards Gal-beta-1,4-GlcNAc, Gal-beta-1,4(Fuc-alpha-1,3)GlcNAc and lower activity towards Gal-beta-1,3(Fuc-alpha-1,4)GlcNAc. This is Galactose-3-O-sulfotransferase 3 (GAL3ST3) from Bos taurus (Bovine).